Here is a 502-residue protein sequence, read N- to C-terminus: Probable cytosol aminopeptidase (502 aa).

2 residues coordinate Mn(2+): Lys-267 and Asp-272. Residue Lys-279 is part of the active site. Positions 290, 349, and 351 each coordinate Mn(2+). Arg-353 is a catalytic residue.

Belongs to the peptidase M17 family. It depends on Mn(2+) as a cofactor.

It is found in the cytoplasm. It carries out the reaction Release of an N-terminal amino acid, Xaa-|-Yaa-, in which Xaa is preferably Leu, but may be other amino acids including Pro although not Arg or Lys, and Yaa may be Pro. Amino acid amides and methyl esters are also readily hydrolyzed, but rates on arylamides are exceedingly low.. It catalyses the reaction Release of an N-terminal amino acid, preferentially leucine, but not glutamic or aspartic acids.. Presumably involved in the processing and regular turnover of intracellular proteins. Catalyzes the removal of unsubstituted N-terminal amino acids from various peptides. This is Probable cytosol aminopeptidase from Aeromonas salmonicida (strain A449).